The sequence spans 451 residues: tRNA modification GTPase MnmE (451 aa).

Positions 25, 87, and 127 each coordinate (6S)-5-formyl-5,6,7,8-tetrahydrofolate. One can recognise a TrmE-type G domain in the interval 222–374 (GLRVALVGRP…FVQVLLERCG (153 aa)). Asn232 serves as a coordination point for K(+). GTP contacts are provided by residues 232 to 237 (NVGKSS), 251 to 257 (TELPGTT), and 276 to 279 (DTAG). Ser236 serves as a coordination point for Mg(2+). K(+) is bound by residues Thr251, Leu253, and Thr256. Thr257 is a Mg(2+) binding site. Lys451 is a binding site for (6S)-5-formyl-5,6,7,8-tetrahydrofolate.

Belongs to the TRAFAC class TrmE-Era-EngA-EngB-Septin-like GTPase superfamily. TrmE GTPase family. As to quaternary structure, homodimer. Heterotetramer of two MnmE and two MnmG subunits. The cofactor is K(+).

Its subcellular location is the cytoplasm. In terms of biological role, exhibits a very high intrinsic GTPase hydrolysis rate. Involved in the addition of a carboxymethylaminomethyl (cmnm) group at the wobble position (U34) of certain tRNAs, forming tRNA-cmnm(5)s(2)U34. In Synechococcus sp. (strain CC9902), this protein is tRNA modification GTPase MnmE.